The chain runs to 170 residues: CASP-like protein 1F1 (170 aa).

Over 1–16 (MMGDNEGRRTPLLNLG) the chain is Cytoplasmic. The helical transmembrane segment at 17-37 (VQVSMRVLIIGAAMASMWVMI) threads the bilayer. The Extracellular portion of the chain corresponds to 38 to 62 (TNREVASVYGIAFEAKYSYSSAFRY). Residues 63–83 (LVYAQIAVCAATLFTLVWACL) traverse the membrane as a helical segment. The Cytoplasmic segment spans residues 84–88 (AVRRR). Residues 89–109 (GLVFALFFFDLLTTLTAISAF) form a helical membrane-spanning segment. Topologically, residues 110 to 141 (SAAFAEGYVGKYGNKQAGWLPICGYVHVYCSR) are extracellular. The chain crosses the membrane as a helical span at residues 142–162 (VTISLAMSFASFVLLFILTVL). Over 163–170 (TASSARHY) the chain is Cytoplasmic.

The protein belongs to the Casparian strip membrane proteins (CASP) family. As to quaternary structure, homodimer and heterodimers.

Its subcellular location is the cell membrane. In Arabidopsis lyrata subsp. lyrata (Lyre-leaved rock-cress), this protein is CASP-like protein 1F1.